A 208-amino-acid polypeptide reads, in one-letter code: Thymidylate kinase (208 aa).

ATP is bound at residue 7–14 (GIDGAGKT).

The protein belongs to the thymidylate kinase family.

It catalyses the reaction dTMP + ATP = dTDP + ADP. In terms of biological role, phosphorylation of dTMP to form dTDP in both de novo and salvage pathways of dTTP synthesis. This Xylella fastidiosa (strain Temecula1 / ATCC 700964) protein is Thymidylate kinase.